Reading from the N-terminus, the 393-residue chain is HORMA domain-containing protein 1 (393 aa).

In terms of domain architecture, HORMA spans 24 to 226 (QQSLVLVKRL…TPFHTFKVKV (203 aa)). The tract at residues 322-393 (SKTSELDVSE…RKFSEPKERI (72 aa)) is disordered. Basic and acidic residues predominate over residues 352–361 (KSKENRKRTQ). A Phosphoserine modification is found at S375. Positions 382 to 385 (KRRK) match the Nuclear localization signal motif.

In terms of assembly, interacts with HORMAD2. Interacts with IHO1. Phosphorylated at Ser-376 in a SPO11-dependent manner.

The protein localises to the nucleus. The protein resides in the chromosome. In terms of biological role, plays a key role in meiotic progression. Regulates 3 different functions during meiosis: ensures that sufficient numbers of processed DNA double-strand breaks (DSBs) are available for successful homology search by increasing the steady-state numbers of single-stranded DSB ends. Promotes synaptonemal-complex formation independently of its role in homology search. Plays a key role in the male mid-pachytene checkpoint and the female meiotic prophase checkpoint: required for efficient build-up of ATR activity on unsynapsed chromosome regions, a process believed to form the basis of meiotic silencing of unsynapsed chromatin (MSUC) and meiotic prophase quality control in both sexes. The polypeptide is HORMA domain-containing protein 1 (HORMAD1) (Bos taurus (Bovine)).